A 73-amino-acid polypeptide reads, in one-letter code: MAKDDVIEVEGKVVDTLPNAMFKVELENGATILAHVSGKIRMHYIRILPGDRVTVELSPYDLTKGRITYRFIK.

An S1-like domain is found at 1-72; sequence MAKDDVIEVE…TKGRITYRFI (72 aa).

This sequence belongs to the IF-1 family. Component of the 30S ribosomal translation pre-initiation complex which assembles on the 30S ribosome in the order IF-2 and IF-3, IF-1 and N-formylmethionyl-tRNA(fMet); mRNA recruitment can occur at any time during PIC assembly.

It is found in the cytoplasm. Functionally, one of the essential components for the initiation of protein synthesis. Stabilizes the binding of IF-2 and IF-3 on the 30S subunit to which N-formylmethionyl-tRNA(fMet) subsequently binds. Helps modulate mRNA selection, yielding the 30S pre-initiation complex (PIC). Upon addition of the 50S ribosomal subunit IF-1, IF-2 and IF-3 are released leaving the mature 70S translation initiation complex. This chain is Translation initiation factor IF-1, found in Lactobacillus acidophilus (strain ATCC 700396 / NCK56 / N2 / NCFM).